The primary structure comprises 382 residues: GDSL esterase/lipase At4g01130 (382 aa).

The signal sequence occupies residues 1 to 28 (MASDINRRRSFSLLVLIIVMLYGHKGDS). The active-site Nucleophile is the Ser-41. Residues Asn-118, Asn-263, Asn-275, and Asn-330 are each glycosylated (N-linked (GlcNAc...) asparagine). Catalysis depends on residues Asp-348 and His-351.

It belongs to the 'GDSL' lipolytic enzyme family.

Its subcellular location is the secreted. The chain is GDSL esterase/lipase At4g01130 from Arabidopsis thaliana (Mouse-ear cress).